Reading from the N-terminus, the 376-residue chain is Multiphosphoryl transfer protein (376 aa).

The region spanning 2–142 (FQLSVQDIHP…EELRALLMGE (141 aa)) is the PTS EIIA type-2 domain. Catalysis depends on H62, which acts as the Tele-phosphohistidine intermediate; for EIIA activity. Residue H62 is modified to Phosphohistidine; by HPr. The m domain stretch occupies residues 156 to 284 (TLDVIASSLV…LTSDDALTDD (129 aa)). The HPr domain maps to 285 to 375 (VLSAEFVVRN…DAIAAGLGEG (91 aa)). H299 (pros-phosphohistidine intermediate; for HPr activity) is an active-site residue. At H299 the chain carries Phosphohistidine; by EI.

It is found in the cytoplasm. Its function is as follows. The phosphoenolpyruvate-dependent sugar phosphotransferase system (sugar PTS), a major carbohydrate active transport system, catalyzes the phosphorylation of incoming sugar substrates concomitantly with their translocation across the cell membrane. The enzyme II FruAB PTS system is involved in fructose transport. This chain is Multiphosphoryl transfer protein (fruB), found in Salmonella typhi.